A 350-amino-acid chain; its full sequence is MKKSTLALVVMGVVASASVHAAEVYNKNGNKLDVYGKVKAMHYISDDDTKDGDQTYVRFGFKGETQINDQLTGYGRWEAEFAGNKAESDSSQKTRLAFAGLKLKDFGSLDYGRNLGALYDVEAWTDMFPEFGGDSSAQTDNFMTKRASGLATYRNTDFFGAIDGLDMTLQYQGKNENRDAKKQNGDGFGTSLTYDFGGTDFAVSGAYTNSDRTNAQNLLARAQGQKAEAWATGLKYDANDIYLAAMYSETRNMTPISGGFANKAQNFEVVAQYQFDFGLRPSLGYVQSKGKDNEGIGDEDLVKYIDVGATYYFNKNMSAFVDYKINQIDDDNKLGVSSDDIVAVGMTYQF.

Positions 1 to 21 (MKKSTLALVVMGVVASASVHA) are cleaved as a signal peptide.

Belongs to the Gram-negative porin family. Homotrimer.

Its subcellular location is the cell outer membrane. In terms of biological role, uptake of inorganic phosphate, phosphorylated compounds, and some other negatively charged solutes. The protein is Outer membrane porin PhoE (phoE) of Enterobacter cloacae.